The sequence spans 177 residues: ATP synthase subunit b (177 aa).

Residues 15–35 form a helical membrane-spanning segment; that stretch reads GISGGTIIYQLLMFIILLALL.

This sequence belongs to the ATPase B chain family. As to quaternary structure, F-type ATPases have 2 components, F(1) - the catalytic core - and F(0) - the membrane proton channel. F(1) has five subunits: alpha(3), beta(3), gamma(1), delta(1), epsilon(1). F(0) has three main subunits: a(1), b(2) and c(10-14). The alpha and beta chains form an alternating ring which encloses part of the gamma chain. F(1) is attached to F(0) by a central stalk formed by the gamma and epsilon chains, while a peripheral stalk is formed by the delta and b chains.

It is found in the cell membrane. In terms of biological role, f(1)F(0) ATP synthase produces ATP from ADP in the presence of a proton or sodium gradient. F-type ATPases consist of two structural domains, F(1) containing the extramembraneous catalytic core and F(0) containing the membrane proton channel, linked together by a central stalk and a peripheral stalk. During catalysis, ATP synthesis in the catalytic domain of F(1) is coupled via a rotary mechanism of the central stalk subunits to proton translocation. Functionally, component of the F(0) channel, it forms part of the peripheral stalk, linking F(1) to F(0). The chain is ATP synthase subunit b from Geobacillus kaustophilus (strain HTA426).